The sequence spans 394 residues: Elongation factor Tu (394 aa).

Residues 10–204 (KPHVNVGTIG…AVDEWIPTPE (195 aa)) enclose the tr-type G domain. Residues 19–26 (GHIDHGKT) are G1. 19–26 (GHIDHGKT) contacts GTP. Thr26 provides a ligand contact to Mg(2+). A G2 region spans residues 60 to 64 (GITIN). Positions 81-84 (DCPG) are G3. GTP-binding positions include 81–85 (DCPGH) and 136–139 (NKCD). Residues 136–139 (NKCD) are G4. Residues 174 to 176 (SAL) are G5.

The protein belongs to the TRAFAC class translation factor GTPase superfamily. Classic translation factor GTPase family. EF-Tu/EF-1A subfamily. In terms of assembly, monomer.

The protein localises to the cytoplasm. The enzyme catalyses GTP + H2O = GDP + phosphate + H(+). Functionally, GTP hydrolase that promotes the GTP-dependent binding of aminoacyl-tRNA to the A-site of ribosomes during protein biosynthesis. This chain is Elongation factor Tu, found in Mycoplasma pneumoniae (strain ATCC 29342 / M129 / Subtype 1) (Mycoplasmoides pneumoniae).